The chain runs to 568 residues: Dihydroxy-acid dehydratase (568 aa).

[2Fe-2S] cluster is bound at residue C59. D91 is a binding site for Mg(2+). C132 contacts [2Fe-2S] cluster. Mg(2+)-binding residues include D133 and K134. K134 carries the post-translational modification N6-carboxylysine. C204 provides a ligand contact to [2Fe-2S] cluster. E456 is a Mg(2+) binding site. S482 (proton acceptor) is an active-site residue.

This sequence belongs to the IlvD/Edd family. In terms of assembly, homodimer. [2Fe-2S] cluster is required as a cofactor. Requires Mg(2+) as cofactor.

It carries out the reaction (2R)-2,3-dihydroxy-3-methylbutanoate = 3-methyl-2-oxobutanoate + H2O. It catalyses the reaction (2R,3R)-2,3-dihydroxy-3-methylpentanoate = (S)-3-methyl-2-oxopentanoate + H2O. Its pathway is amino-acid biosynthesis; L-isoleucine biosynthesis; L-isoleucine from 2-oxobutanoate: step 3/4. It participates in amino-acid biosynthesis; L-valine biosynthesis; L-valine from pyruvate: step 3/4. Functionally, functions in the biosynthesis of branched-chain amino acids. Catalyzes the dehydration of (2R,3R)-2,3-dihydroxy-3-methylpentanoate (2,3-dihydroxy-3-methylvalerate) into 2-oxo-3-methylpentanoate (2-oxo-3-methylvalerate) and of (2R)-2,3-dihydroxy-3-methylbutanoate (2,3-dihydroxyisovalerate) into 2-oxo-3-methylbutanoate (2-oxoisovalerate), the penultimate precursor to L-isoleucine and L-valine, respectively. The chain is Dihydroxy-acid dehydratase from Verminephrobacter eiseniae (strain EF01-2).